A 2222-amino-acid chain; its full sequence is Voltage-dependent R-type calcium channel subunit alpha-1E (2222 aa).

Residues Met1–Pro40 lie on the Cytoplasmic side of the membrane. The I repeat unit spans residues Asn27 to Phe305. The helical transmembrane segment at Pro41 to Leu59 threads the bilayer. At Glu60–Thr78 the chain is on the extracellular side. A helical membrane pass occupies residues Glu79–Leu97. The Cytoplasmic portion of the chain corresponds to Gly98–Asn109. The chain crosses the membrane as a helical span at residues Gly110–Leu124. The Extracellular portion of the chain corresponds to Ala125–Asp136. Residues Leu137–Pro156 form a helical membrane-spanning segment. Residues Ser157 to Gln174 are Cytoplasmic-facing. Residues Ile175–Ser195 traverse the membrane as a helical segment. Topologically, residues Gly196–Trp277 are extracellular. Residue Asn205 is glycosylated (N-linked (GlcNAc...) asparagine). Residues Asn278 to Leu301 traverse the membrane as a helical segment. Over Ser302 to Gln427 the chain is Cytoplasmic. The tract at residues Gln325–Glu342 is binding to the beta subunit. Residue Asp377 participates in Ca(2+) binding. The residue at position 378 (Ser378) is a Phosphoserine. 3 residues coordinate Ca(2+): Ser379, Glu381, and Cys383. A Phosphothreonine modification is found at Thr391. Residues Glu413–Leu657 form an II repeat. Residues Val428–Val447 form a helical membrane-spanning segment. Residues His448–Tyr460 lie on the Extracellular side of the membrane. Residues Tyr461 to Gly480 traverse the membrane as a helical segment. Residues Met481–Ser489 lie on the Cytoplasmic side of the membrane. A helical transmembrane segment spans residues Ser490 to Trp508. Residues Ala509–Gly518 lie on the Extracellular side of the membrane. Residues Ile519–Trp537 form a helical membrane-spanning segment. Residues Ala538–Ser556 are Cytoplasmic-facing. Residues Leu557 to Phe576 form a helical membrane-spanning segment. The Extracellular portion of the chain corresponds to Gly577–Trp629. A helical membrane pass occupies residues Ser630–Val654. Residues Asp655 to Tyr1100 lie on the Cytoplasmic side of the membrane. Positions Leu680–Ser727 are disordered. Phosphoserine occurs at positions 687, 696, 744, 766, and 806. Disordered stretches follow at residues Asn820–Gly944 and Asn1042–Gly1076. Residues Arg864 to Val877 show a composition bias toward basic residues. The span at Ser884–Glu896 shows a compositional bias: low complexity. Ser898 is subject to Phosphoserine. Composition is skewed to basic and acidic residues over residues Asp906–Arg935 and Thr1044–Glu1055. Ser1049 is subject to Phosphoserine. One copy of the III repeat lies at Asn1092–Phe1378. The chain crosses the membrane as a helical span at residues Ile1101–Ala1117. Residues Ser1118–Phe1141 lie on the Extracellular side of the membrane. Residues Asp1142–Gly1161 traverse the membrane as a helical segment. The Cytoplasmic segment spans residues Leu1162 to Tyr1169. The chain crosses the membrane as a helical span at residues Phe1170–Ala1192. The Extracellular segment spans residues Asn1193–Ile1206. A helical transmembrane segment spans residues Lys1207–Leu1224. Topologically, residues Pro1225–Asn1243 are cytoplasmic. The chain crosses the membrane as a helical span at residues Ile1244 to Phe1263. Over Lys1264–Glu1350 the chain is Extracellular. Residues Met1351 to Ile1374 traverse the membrane as a helical segment. Residues Ile1375–Ser1431 lie on the Cytoplasmic side of the membrane. The IV repeat unit spans residues Asn1415–Phe1678. The helical transmembrane segment at Phe1432–Lys1450 threads the bilayer. Residues Tyr1451 to Ile1467 lie on the Extracellular side of the membrane. A helical membrane pass occupies residues Ala1468–Gly1485. At Phe1486–Thr1493 the chain is on the cytoplasmic side. The chain crosses the membrane as a helical span at residues Trp1494–Thr1512. The Extracellular portion of the chain corresponds to Asp1513–Asn1523. N-linked (GlcNAc...) asparagine glycans are attached at residues Asn1518 and Asn1523. The helical transmembrane segment at Met1524–Gly1542 threads the bilayer. The Cytoplasmic segment spans residues Tyr1543–Tyr1561. Residues Val1562–Phe1581 traverse the membrane as a helical segment. Residues Gly1582 to Leu1650 are Extracellular-facing. An N-linked (GlcNAc...) asparagine glycan is attached at Asn1641. The helical transmembrane segment at Ala1651–Asp1676 threads the bilayer. Residues Asn1677–Cys2222 are Cytoplasmic-facing. One can recognise an EF-hand domain in the interval His1691–Pro1726. Ca(2+)-binding residues include Asp1704, Arg1710, and Glu1715. The interval Ser1970–His2135 is disordered. A compositionally biased stretch (basic and acidic residues) spans Leu1974–Arg1994. Ser2003 and Ser2022 each carry phosphoserine. Positions Asn2010–Gln2027 are enriched in basic and acidic residues. Over residues Ser2046–Pro2061 the composition is skewed to low complexity. A compositionally biased stretch (polar residues) spans Leu2104 to Leu2123. Positions His2124 to His2135 are enriched in low complexity.

It belongs to the calcium channel alpha-1 subunit (TC 1.A.1.11) family. CACNA1E subfamily. In terms of assembly, interacts with EFHC1. Voltage-dependent calcium channels are multisubunit complexes, consisting of alpha-1, alpha-2, beta and delta subunits in a 1:1:1:1 ratio. The channel activity is directed by the pore-forming and voltage-sensitive alpha-1 subunit. In many cases, this subunit is sufficient to generate voltage-sensitive calcium channel activity. The auxiliary subunits beta and alpha-2/delta linked by a disulfide bridge regulate the channel activity. As to expression, expressed in central nervous system and in insulinoma.

The protein localises to the membrane. The enzyme catalyses Ca(2+)(in) = Ca(2+)(out). In terms of biological role, voltage-sensitive calcium channels (VSCC) mediate the entry of calcium ions into excitable cells and are also involved in a variety of calcium-dependent processes, including muscle contraction, hormone or neurotransmitter release, gene expression, cell motility, cell division and cell death. The isoform alpha-1E gives rise to R-type calcium currents. R-type calcium channels belong to the 'high-voltage activated' (HVA) group and are blocked by nickel. They are however insensitive to dihydropyridines (DHP). Calcium channels containing alpha-1E subunit could be involved in the modulation of firing patterns of neurons which is important for information processing. This Rattus norvegicus (Rat) protein is Voltage-dependent R-type calcium channel subunit alpha-1E (Cacna1e).